We begin with the raw amino-acid sequence, 630 residues long: Biosynthetic arginine decarboxylase (630 aa).

At Lys99 the chain carries N6-(pyridoxal phosphate)lysine. 281–291 (VDIGGGLGVDY) is a substrate binding site.

This sequence belongs to the Orn/Lys/Arg decarboxylase class-II family. SpeA subfamily. It depends on Mg(2+) as a cofactor. Pyridoxal 5'-phosphate is required as a cofactor.

It carries out the reaction L-arginine + H(+) = agmatine + CO2. Its pathway is amine and polyamine biosynthesis; agmatine biosynthesis; agmatine from L-arginine: step 1/1. Its function is as follows. Catalyzes the biosynthesis of agmatine from arginine. The sequence is that of Biosynthetic arginine decarboxylase from Bacteroides fragilis (strain ATCC 25285 / DSM 2151 / CCUG 4856 / JCM 11019 / LMG 10263 / NCTC 9343 / Onslow / VPI 2553 / EN-2).